Consider the following 237-residue polypeptide: Orotidine 5'-phosphate decarboxylase (237 aa).

Substrate contacts are provided by residues Asp-11, Lys-34, 61–70, Thr-124, Arg-186, Gln-195, Gly-215, and Arg-216; that span reads DLKLHDIPNT. The active-site Proton donor is the Lys-63.

The protein belongs to the OMP decarboxylase family. Type 1 subfamily. As to quaternary structure, homodimer.

It carries out the reaction orotidine 5'-phosphate + H(+) = UMP + CO2. It functions in the pathway pyrimidine metabolism; UMP biosynthesis via de novo pathway; UMP from orotate: step 2/2. Catalyzes the decarboxylation of orotidine 5'-monophosphate (OMP) to uridine 5'-monophosphate (UMP). The protein is Orotidine 5'-phosphate decarboxylase of Lactococcus lactis subsp. lactis (strain IL1403) (Streptococcus lactis).